A 348-amino-acid polypeptide reads, in one-letter code: D-erythrose-4-phosphate dehydrogenase (348 aa).

NAD(+) contacts are provided by residues 12–13 (RI) and arginine 81. Substrate is bound by residues 154–156 (SCT), arginine 200, 213–214 (TK), and arginine 236. Cysteine 155 serves as the catalytic Nucleophile. An NAD(+)-binding site is contributed by asparagine 318.

This sequence belongs to the glyceraldehyde-3-phosphate dehydrogenase family. Epd subfamily. As to quaternary structure, homotetramer.

It localises to the cytoplasm. It catalyses the reaction D-erythrose 4-phosphate + NAD(+) + H2O = 4-phospho-D-erythronate + NADH + 2 H(+). Its pathway is cofactor biosynthesis; pyridoxine 5'-phosphate biosynthesis; pyridoxine 5'-phosphate from D-erythrose 4-phosphate: step 1/5. Catalyzes the NAD-dependent conversion of D-erythrose 4-phosphate to 4-phosphoerythronate. The protein is D-erythrose-4-phosphate dehydrogenase of Salmonella schwarzengrund (strain CVM19633).